The following is a 264-amino-acid chain: Thymidylate synthase (264 aa).

R21 contacts dUMP. Residue H51 coordinates (6R)-5,10-methylene-5,6,7,8-tetrahydrofolate. R126–R127 lines the dUMP pocket. The active-site Nucleophile is the C146. Residues R166–D169, N177, and H207–Y209 contribute to the dUMP site. D169 provides a ligand contact to (6R)-5,10-methylene-5,6,7,8-tetrahydrofolate. S263 lines the (6R)-5,10-methylene-5,6,7,8-tetrahydrofolate pocket.

The protein belongs to the thymidylate synthase family. Bacterial-type ThyA subfamily. Homodimer.

It is found in the cytoplasm. The enzyme catalyses dUMP + (6R)-5,10-methylene-5,6,7,8-tetrahydrofolate = 7,8-dihydrofolate + dTMP. Its pathway is pyrimidine metabolism; dTTP biosynthesis. Catalyzes the reductive methylation of 2'-deoxyuridine-5'-monophosphate (dUMP) to 2'-deoxythymidine-5'-monophosphate (dTMP) while utilizing 5,10-methylenetetrahydrofolate (mTHF) as the methyl donor and reductant in the reaction, yielding dihydrofolate (DHF) as a by-product. This enzymatic reaction provides an intracellular de novo source of dTMP, an essential precursor for DNA biosynthesis. The protein is Thymidylate synthase of Neisseria gonorrhoeae (strain ATCC 700825 / FA 1090).